A 426-amino-acid polypeptide reads, in one-letter code: Adenylosuccinate synthetase (426 aa).

GTP-binding positions include G18–K24 and G46–T48. The active-site Proton acceptor is D19. Positions 19 and 46 each coordinate Mg(2+). Residues D19–K22, N44–H47, T136, R150, Q222, T237, and R301 each bind IMP. H47 (proton donor) is an active-site residue. V297–R303 lines the substrate pocket. GTP contacts are provided by residues R303, K329–D331, and G413–G415.

Belongs to the adenylosuccinate synthetase family. As to quaternary structure, homodimer. Mg(2+) is required as a cofactor.

It is found in the cytoplasm. It catalyses the reaction IMP + L-aspartate + GTP = N(6)-(1,2-dicarboxyethyl)-AMP + GDP + phosphate + 2 H(+). It functions in the pathway purine metabolism; AMP biosynthesis via de novo pathway; AMP from IMP: step 1/2. Plays an important role in the de novo pathway and in the salvage pathway of purine nucleotide biosynthesis. Catalyzes the first committed step in the biosynthesis of AMP from IMP. The protein is Adenylosuccinate synthetase of Schistosoma mansoni (Blood fluke).